The chain runs to 333 residues: Protein XAP5 CIRCADIAN TIMEKEEPER (333 aa).

Coiled-coil stretches lie at residues 12 to 43 (AQDAVKIRRLEKQREAERRKIEELKNKSSDGQ) and 70 to 116 (TREQ…VRGD). Over residues 89 to 98 (EKEKLQKLQQ) the composition is skewed to basic and acidic residues. The interval 89–171 (EKEKLQKLQQ…REREAEEQAE (83 aa)) is disordered. Residues 123–136 (DEIENGSDEDEFEN) are compositionally biased toward acidic residues. A compositionally biased stretch (basic and acidic residues) spans 160–171 (PDREREAEEQAE).

The protein belongs to the FAM50 family.

The protein localises to the nucleus. Involved in light regulation of the circadian clock and photomorphogenesis. This Oryza sativa subsp. indica (Rice) protein is Protein XAP5 CIRCADIAN TIMEKEEPER (XCT).